The primary structure comprises 397 residues: CCA-adding enzyme (397 aa).

Residues glycine 27 and arginine 30 each contribute to the ATP site. CTP contacts are provided by glycine 27 and arginine 30. Residues aspartate 40 and aspartate 42 each contribute to the Mg(2+) site. The ATP site is built by arginine 111, aspartate 154, arginine 157, arginine 160, and arginine 163. CTP is bound by residues arginine 111, aspartate 154, arginine 157, arginine 160, and arginine 163.

Belongs to the tRNA nucleotidyltransferase/poly(A) polymerase family. Bacterial CCA-adding enzyme type 3 subfamily. Homodimer. The cofactor is Mg(2+).

The catalysed reaction is a tRNA precursor + 2 CTP + ATP = a tRNA with a 3' CCA end + 3 diphosphate. It carries out the reaction a tRNA with a 3' CCA end + 2 CTP + ATP = a tRNA with a 3' CCACCA end + 3 diphosphate. Functionally, catalyzes the addition and repair of the essential 3'-terminal CCA sequence in tRNAs without using a nucleic acid template. Adds these three nucleotides in the order of C, C, and A to the tRNA nucleotide-73, using CTP and ATP as substrates and producing inorganic pyrophosphate. tRNA 3'-terminal CCA addition is required both for tRNA processing and repair. Also involved in tRNA surveillance by mediating tandem CCA addition to generate a CCACCA at the 3' terminus of unstable tRNAs. While stable tRNAs receive only 3'-terminal CCA, unstable tRNAs are marked with CCACCA and rapidly degraded. The sequence is that of CCA-adding enzyme from Anoxybacillus flavithermus (strain DSM 21510 / WK1).